Reading from the N-terminus, the 558-residue chain is Mitochondrial nucleoid-associated protein 1 (558 aa).

Topologically, residues 1-527 are extracellular; that stretch reads MGAAEPRMEV…VQCNTTIKKS (527 aa). Disordered regions lie at residues 29 to 88, 130 to 205, and 222 to 269; these read KMRG…SWTA, LQRV…KLGT, and LSDR…KTQK. The span at 36-45 shows a compositional bias: polar residues; sequence SADQNVSQSK. Residues 51–81 show a composition bias toward basic and acidic residues; the sequence is QKEKSPTRDLTRAKEKELEVDRPKRAVKAET. Polar residues-rich tracts occupy residues 131-144 and 187-197; these read QRVT…SDAT and SSTQPHANPAT. Residues 528–548 traverse the membrane as a helical segment; that stretch reads GVGGLTMLFAGYFILCCNWSF. Residues 549–558 lie on the Cytoplasmic side of the membrane; that stretch reads KHLKLQHWRK.

It is found in the mitochondrion inner membrane. Its subcellular location is the mitochondrion matrix. The protein localises to the mitochondrion nucleoid. Its function is as follows. Critical regulator of mitochondrial DNA (mtDNA) abundance. Binds dsDNA throughout the mitochondrial genome without sequence specificity and controls mtDNA copy number by promoting its replication. Also plays important roles in mitochondrial metabolism and cell proliferation. In Mus musculus (Mouse), this protein is Mitochondrial nucleoid-associated protein 1.